Here is a 374-residue protein sequence, read N- to C-terminus: Lactoyl-CoA dehydratase subunit beta (374 aa).

The protein belongs to the FldB/FldC dehydratase alpha/beta subunit family. As to quaternary structure, heterodimer of an alpha (LcdA) and a beta (LcdB) subunit. [4Fe-4S] cluster serves as cofactor. Requires FMN as cofactor. Riboflavin is required as a cofactor. It depends on Mg(2+) as a cofactor.

It catalyses the reaction (R)-lactoyl-CoA = acryloyl-CoA + H2O. The catalysed reaction is (2R)-hydroxybutanoyl-CoA = (2E)-butenoyl-CoA + H2O. Its activity is regulated as follows. Activated by the LcdC protein. Involved in the acrylate pathway for the conversion of D-lactic acid to propionic acid. Catalyzes the reversible dehydration of Lactoyl-CoA and 2-hydroxybutyroyl-CoA to acryloyl-CoA and crotonyl-CoA, respectively. The polypeptide is Lactoyl-CoA dehydratase subunit beta (lcdB) (Anaerotignum propionicum (Clostridium propionicum)).